Reading from the N-terminus, the 529-residue chain is Bifunctional purine biosynthesis protein PurH (529 aa).

The MGS-like domain maps to 1–148; that stretch reads MQQRRPVRRA…KNHKDVAIVV (148 aa). Lys-287 is subject to N6-acetyllysine.

It belongs to the PurH family.

The catalysed reaction is (6R)-10-formyltetrahydrofolate + 5-amino-1-(5-phospho-beta-D-ribosyl)imidazole-4-carboxamide = 5-formamido-1-(5-phospho-D-ribosyl)imidazole-4-carboxamide + (6S)-5,6,7,8-tetrahydrofolate. It carries out the reaction IMP + H2O = 5-formamido-1-(5-phospho-D-ribosyl)imidazole-4-carboxamide. It participates in purine metabolism; IMP biosynthesis via de novo pathway; 5-formamido-1-(5-phospho-D-ribosyl)imidazole-4-carboxamide from 5-amino-1-(5-phospho-D-ribosyl)imidazole-4-carboxamide (10-formyl THF route): step 1/1. Its pathway is purine metabolism; IMP biosynthesis via de novo pathway; IMP from 5-formamido-1-(5-phospho-D-ribosyl)imidazole-4-carboxamide: step 1/1. In Escherichia coli O45:K1 (strain S88 / ExPEC), this protein is Bifunctional purine biosynthesis protein PurH.